Reading from the N-terminus, the 91-residue chain is Kazal-type trypsin inhibitor (91 aa).

A signal peptide spans 1 to 22; sequence MRHIGVFVGVLALALVLLVVEA. A Kazal-like domain is found at 25-78; it reads DAERGVCACPRIYMPVCGSNLKTYNNDCLLRCEINSDLGRANNLRKIADQACDN. 3 disulfides stabilise this stretch: Cys-31-Cys-56, Cys-33-Cys-52, and Cys-41-Cys-76. An N-linked (GlcNAc...) asparagine glycan is attached at Asn-78.

In terms of assembly, interacts with human PLG (plasmin). As to expression, female salivary gland. Female gut at 3 and 24 hours after blood feeding. Female carcass. Male tissues. Not detected in ovary and fat body at 3 and 24 hours after blood feeding.

Its subcellular location is the secreted. In terms of biological role, anticoagulant protein that decreases host thrombin (F2) activity via an uncompetitive inhibition mechanism. Inhibits amidolytic activity of host plasmin (PLG). Inhibits amidolytic activity of host trypsin. Inhibits trypsin-like endogenous activity from gut of female mosquitoes 24 hours after feeding and weakly affects enzyme activity from gut 3 hours after feeding, suggesting a possible role as an inhibitor of endogenous proteases. Its function is as follows. (Microbial infection) Limits host plasmin-mediated enhancement of dengue virus type 2 infection in mosquito midgut. The protein is Kazal-type trypsin inhibitor of Aedes aegypti (Yellowfever mosquito).